The chain runs to 359 residues: 3-dehydroquinate synthase (359 aa).

Residues aspartate 71–lysine 76, glycine 105–aspartate 109, threonine 129–threonine 130, lysine 142, lysine 151, and threonine 169–threonine 172 contribute to the NAD(+) site. 3 residues coordinate Zn(2+): glutamate 184, histidine 247, and histidine 264.

The protein belongs to the sugar phosphate cyclases superfamily. Dehydroquinate synthase family. It depends on Co(2+) as a cofactor. Zn(2+) serves as cofactor. Requires NAD(+) as cofactor.

It localises to the cytoplasm. The enzyme catalyses 7-phospho-2-dehydro-3-deoxy-D-arabino-heptonate = 3-dehydroquinate + phosphate. It functions in the pathway metabolic intermediate biosynthesis; chorismate biosynthesis; chorismate from D-erythrose 4-phosphate and phosphoenolpyruvate: step 2/7. Its function is as follows. Catalyzes the conversion of 3-deoxy-D-arabino-heptulosonate 7-phosphate (DAHP) to dehydroquinate (DHQ). The protein is 3-dehydroquinate synthase of Neisseria meningitidis serogroup C (strain 053442).